The following is a 333-amino-acid chain: Sphingomyelinase C (333 aa).

An N-terminal signal peptide occupies residues M1–A27. The cysteines at positions 150 and 186 are disulfide-linked.

It belongs to the neutral sphingomyelinase family. Requires Mg(2+) as cofactor.

The protein localises to the secreted. The catalysed reaction is a sphingomyelin + H2O = phosphocholine + an N-acylsphing-4-enine + H(+). Activated by cobalt and manganese ions. In terms of biological role, required, with sphingomyelinase, to effect target cell lysis (hemolysis). The sequence is that of Sphingomyelinase C (sph) from Bacillus cereus.